The primary structure comprises 333 residues: CMP-N-acetylneuraminate-beta-galactosamide-alpha-2,3-sialyltransferase 4 (333 aa).

At 1-8 (MTSKSHWK) the chain is on the cytoplasmic side. A helical; Signal-anchor for type II membrane protein membrane pass occupies residues 9–26 (LLALALVLVVVMVWYSIS). At 27–333 (REDRYIEFFY…MGAVKNLTYF (307 aa)) the chain is on the lumenal side. Asn61, Asn131, Asn310, and Asn329 each carry an N-linked (GlcNAc...) asparagine glycan. Residues Cys120 and Cys273 are joined by a disulfide bond.

The protein belongs to the glycosyltransferase 29 family.

It is found in the golgi apparatus. The protein resides in the golgi stack membrane. The catalysed reaction is a beta-D-galactosyl-(1-&gt;3)-N-acetyl-beta-D-galactosaminyl derivative + CMP-N-acetyl-beta-neuraminate = an N-acetyl-alpha-neuraminyl-(2-&gt;3)-beta-D-galactosyl-(1-&gt;3)-N-acetyl-beta-D-galactosaminyl derivative + CMP + H(+). The enzyme catalyses a beta-D-galactosyl-(1-&gt;3)-N-acetyl-alpha-D-galactosaminyl derivative + CMP-N-acetyl-beta-neuraminate = an N-acetyl-alpha-neuraminyl-(2-&gt;3)-beta-D-galactosyl-(1-&gt;3)-N-acetyl-alpha-D-galactosaminyl derivative + CMP + H(+). It catalyses the reaction a beta-D-galactosyl-(1-&gt;4)-N-acetyl-beta-D-glucosaminyl derivative + CMP-N-acetyl-beta-neuraminate = an N-acetyl-alpha-neuraminyl-(2-&gt;3)-beta-D-galactosyl-(1-&gt;4)-N-acetyl-beta-D-glucosaminyl derivative + CMP + H(+). It carries out the reaction a ganglioside GM1 (d18:1(4E)) + CMP-N-acetyl-beta-neuraminate = a ganglioside GD1a (d18:1(4E)) + CMP + H(+). The catalysed reaction is a ganglioside GA1 (d18:1(4E)) + CMP-N-acetyl-beta-neuraminate = a ganglioside GM1b (d18:1(4E)) + CMP + H(+). The enzyme catalyses a ganglioside GT1c (d18:1(4E)) + CMP-N-acetyl-beta-neuraminate = a ganglioside GQ1c (d18:1(4E)) + CMP + H(+). It catalyses the reaction a neolactoside nLc4Cer + CMP-N-acetyl-beta-neuraminate = a neolactoside IV(3)-alpha-NeuAc-nLc4Cer + CMP + H(+). It carries out the reaction a neolactoside nLc4Cer(d18:1(4E)) + CMP-N-acetyl-beta-neuraminate = a neolactoside IV(3)-alpha-NeuAc-nLc4Cer(d18:1(4E)) + CMP + H(+). Its pathway is protein modification; protein glycosylation. It functions in the pathway glycolipid biosynthesis. Its function is as follows. A beta-galactoside alpha2-3 sialyltransferase involved in terminal sialylation of glycoproteins and glycolipids. Catalyzes the transfer of sialic acid (N-acetyl-neuraminic acid; Neu5Ac) from the nucleotide sugar donor CMP-Neu5Ac onto acceptor Galbeta-(1-&gt;3)-GalNAc- and Galbeta-(1-&gt;4)-GlcNAc-terminated glycoconjugates through an alpha2-3 linkage. Plays a major role in hemostasis. Responsible for sialylation of plasma VWF/von Willebrand factor, preventing its recognition by asialoglycoprotein receptors (ASGPR) and subsequent clearance. Regulates ASGPR-mediated clearance of platelets. Participates in the biosynthesis of the sialyl Lewis X epitopes, both on O- and N-glycans, which are recognized by SELE/E-selectin, SELP/P-selectin and SELL/L-selectin. Essential for selectin-mediated rolling and adhesion of leukocytes during extravasation. Contributes to adhesion and transendothelial migration of neutrophils likely through terminal sialylation of CXCR2. In glycosphingolipid biosynthesis, sialylates GM1 and GA1 gangliosides to form GD1a and GM1b, respectively. Metabolizes brain c-series ganglioside GT1c forming GQ1c. Synthesizes ganglioside LM1 (IV3Neu5Ac-nLc4Cer), a major structural component of peripheral nerve myelin. The sequence is that of CMP-N-acetylneuraminate-beta-galactosamide-alpha-2,3-sialyltransferase 4 (St3gal4) from Rattus norvegicus (Rat).